The primary structure comprises 1434 residues: DNA-directed RNA polymerase subunit beta' (1434 aa).

Zn(2+) contacts are provided by Cys70, Cys72, Cys85, and Cys88. Asp460, Asp462, and Asp464 together coordinate Mg(2+). The Zn(2+) site is built by Cys840, Cys914, Cys921, and Cys924.

This sequence belongs to the RNA polymerase beta' chain family. As to quaternary structure, the RNAP catalytic core consists of 2 alpha, 1 beta, 1 beta' and 1 omega subunit. When a sigma factor is associated with the core the holoenzyme is formed, which can initiate transcription. Mg(2+) is required as a cofactor. Zn(2+) serves as cofactor.

The catalysed reaction is RNA(n) + a ribonucleoside 5'-triphosphate = RNA(n+1) + diphosphate. Its function is as follows. DNA-dependent RNA polymerase catalyzes the transcription of DNA into RNA using the four ribonucleoside triphosphates as substrates. This Tolumonas auensis (strain DSM 9187 / NBRC 110442 / TA 4) protein is DNA-directed RNA polymerase subunit beta'.